Here is a 145-residue protein sequence, read N- to C-terminus: Immune protein Tsi3 (145 aa).

The N-terminal stretch at 1 to 15 (MKTVALILASLALLA) is a signal peptide. Residue Cys-16 is the site of N-palmitoyl cysteine attachment. Cys-16 carries the S-diacylglycerol cysteine lipid modification. The disordered stretch occupies residues 53–85 (FDEGGKLRNPRQLEVQRQDAPPPPDLASRRLGD). Residue Glu-126 participates in Ca(2+) binding.

As to quaternary structure, forms a heterotetramer with Tse3 consisting of two Tse3 dimers and two Tsi3 dimers. Formation of the complex inactivates Tse3 enzymatic activity.

Functionally, immunity protein that plays a role in preventing early activation of toxin Tse3. Occupies Tse3 substrate binding site and prevents the substrate from entering. In Pseudomonas aeruginosa (strain ATCC 15692 / DSM 22644 / CIP 104116 / JCM 14847 / LMG 12228 / 1C / PRS 101 / PAO1), this protein is Immune protein Tsi3.